The following is a 429-amino-acid chain: Histidine--tRNA ligase (429 aa).

It belongs to the class-II aminoacyl-tRNA synthetase family. As to quaternary structure, homodimer.

Its subcellular location is the cytoplasm. It carries out the reaction tRNA(His) + L-histidine + ATP = L-histidyl-tRNA(His) + AMP + diphosphate + H(+). This chain is Histidine--tRNA ligase, found in Prochlorococcus marinus (strain MIT 9515).